The following is a 165-amino-acid chain: Basic transcription factor 3 (165 aa).

One can recognise an NAC-A/B domain in the interval 33 to 97 (TTDDKRLQST…PQTKKLQDIL (65 aa)). The segment covering 120 to 134 (QKQASGEGNAASATI) has biased composition (polar residues). Residues 120–144 (QKQASGEGNAASATIQEEDDDDVPE) are disordered.

Belongs to the NAC-beta family. In terms of assembly, part of the nascent polypeptide-associated complex (NAC). Interacts with EIF(ISO)4E.

The protein is Basic transcription factor 3 of Arabidopsis thaliana (Mouse-ear cress).